The sequence spans 143 residues: Hemoglobin subunit alpha-1 (143 aa).

Serine 2 is modified (N-acetylserine). The region spanning 2 to 143 (SLSSKDKATV…RALALAEKYR (142 aa)) is the Globin domain. Histidine 60 provides a ligand contact to O2. Histidine 89 is a heme b binding site.

The protein belongs to the globin family. As to quaternary structure, hb 1 is a heterotetramer of two alpha-1 and two beta-1 chains. Hb 3 is a heterotetramer of two alpha-1 and two beta-2 chains. Red blood cells.

Its function is as follows. Involved in oxygen transport from gills to the various peripheral tissues. In Gadus morhua (Atlantic cod), this protein is Hemoglobin subunit alpha-1 (hba1).